The sequence spans 87 residues: Small ribosomal subunit protein bS20 (87 aa).

It belongs to the bacterial ribosomal protein bS20 family.

Functionally, binds directly to 16S ribosomal RNA. The chain is Small ribosomal subunit protein bS20 from Nitrosomonas europaea (strain ATCC 19718 / CIP 103999 / KCTC 2705 / NBRC 14298).